The sequence spans 134 residues: Glycine cleavage system H protein (134 aa).

The region spanning 24–106 (TVRVGITDYA…YGAGWLLDIQ (83 aa)) is the Lipoyl-binding domain. Lysine 65 is subject to N6-lipoyllysine.

Belongs to the GcvH family. The glycine cleavage system is composed of four proteins: P, T, L and H. (R)-lipoate is required as a cofactor.

Functionally, the glycine cleavage system catalyzes the degradation of glycine. The H protein shuttles the methylamine group of glycine from the P protein to the T protein. The protein is Glycine cleavage system H protein of Mycobacterium bovis (strain ATCC BAA-935 / AF2122/97).